The sequence spans 186 residues: Peptidyl-tRNA hydrolase (186 aa).

TRNA is bound at residue Tyr14. The Proton acceptor role is filled by His19. Residues Tyr61, Asn63, and Asn107 each contribute to the tRNA site.

Belongs to the PTH family. As to quaternary structure, monomer.

Its subcellular location is the cytoplasm. The catalysed reaction is an N-acyl-L-alpha-aminoacyl-tRNA + H2O = an N-acyl-L-amino acid + a tRNA + H(+). Its function is as follows. Hydrolyzes ribosome-free peptidyl-tRNAs (with 1 or more amino acids incorporated), which drop off the ribosome during protein synthesis, or as a result of ribosome stalling. In terms of biological role, catalyzes the release of premature peptidyl moieties from peptidyl-tRNA molecules trapped in stalled 50S ribosomal subunits, and thus maintains levels of free tRNAs and 50S ribosomes. This is Peptidyl-tRNA hydrolase from Helicobacter pylori (strain P12).